The primary structure comprises 245 residues: 1-(5-phosphoribosyl)-5-[(5-phosphoribosylamino)methylideneamino] imidazole-4-carboxamide isomerase (245 aa).

Aspartate 7 (proton acceptor) is an active-site residue. Aspartate 129 functions as the Proton donor in the catalytic mechanism.

Belongs to the HisA/HisF family.

The protein localises to the cytoplasm. The catalysed reaction is 1-(5-phospho-beta-D-ribosyl)-5-[(5-phospho-beta-D-ribosylamino)methylideneamino]imidazole-4-carboxamide = 5-[(5-phospho-1-deoxy-D-ribulos-1-ylimino)methylamino]-1-(5-phospho-beta-D-ribosyl)imidazole-4-carboxamide. It participates in amino-acid biosynthesis; L-histidine biosynthesis; L-histidine from 5-phospho-alpha-D-ribose 1-diphosphate: step 4/9. This is 1-(5-phosphoribosyl)-5-[(5-phosphoribosylamino)methylideneamino] imidazole-4-carboxamide isomerase from Serratia proteamaculans (strain 568).